A 141-amino-acid chain; its full sequence is Flagellar assembly factor FliW (141 aa).

This sequence belongs to the FliW family. As to quaternary structure, interacts with translational regulator CsrA and flagellin(s).

It is found in the cytoplasm. Its function is as follows. Acts as an anti-CsrA protein, binds CsrA and prevents it from repressing translation of its target genes, one of which is flagellin. Binds to flagellin and participates in the assembly of the flagellum. This Clostridium botulinum (strain Alaska E43 / Type E3) protein is Flagellar assembly factor FliW.